The sequence spans 712 residues: Polyribonucleotide nucleotidyltransferase (712 aa).

Mg(2+)-binding residues include Asp-485 and Asp-491. Residues 552 to 611 (PRIHTMKIDPKKIKDVIGKGGAVIRSLTEETGTSIDIDDDGTVKIAATDNNAAKMVMSRI) enclose the KH domain. Residues 621 to 689 (NAIYTGKVSR…RQNRIRLTMK (69 aa)) form the S1 motif domain.

Belongs to the polyribonucleotide nucleotidyltransferase family. Component of the RNA degradosome, which is a multiprotein complex involved in RNA processing and mRNA degradation. Requires Mg(2+) as cofactor.

Its subcellular location is the cytoplasm. It carries out the reaction RNA(n+1) + phosphate = RNA(n) + a ribonucleoside 5'-diphosphate. In terms of biological role, involved in mRNA degradation. Catalyzes the phosphorolysis of single-stranded polyribonucleotides processively in the 3'- to 5'-direction. In Haemophilus ducreyi (strain 35000HP / ATCC 700724), this protein is Polyribonucleotide nucleotidyltransferase.